The chain runs to 864 residues: Protein translocase subunit SecA (864 aa).

ATP is bound by residues Gln-87, 105–109 (GEGKT), and Asp-512.

The protein belongs to the SecA family. Monomer and homodimer. Part of the essential Sec protein translocation apparatus which comprises SecA, SecYEG and auxiliary proteins SecDF-YajC and YidC.

Its subcellular location is the cell inner membrane. The protein resides in the cytoplasm. It catalyses the reaction ATP + H2O + cellular proteinSide 1 = ADP + phosphate + cellular proteinSide 2.. Its function is as follows. Part of the Sec protein translocase complex. Interacts with the SecYEG preprotein conducting channel. Has a central role in coupling the hydrolysis of ATP to the transfer of proteins into and across the cell membrane, serving as an ATP-driven molecular motor driving the stepwise translocation of polypeptide chains across the membrane. The chain is Protein translocase subunit SecA from Buchnera aphidicola subsp. Cinara cedri (strain Cc).